Consider the following 166-residue polypeptide: Putative membrane protein 162 (166 aa).

Residue M1 is a topological domain, intravirion. Residues 2–22 traverse the membrane as a helical segment; the sequence is YYPAVQVLIGIILVDNFNTEF. The Virion surface portion of the chain corresponds to 23–166; that stretch reads LSSEKKNCKT…TIMGIARNIL (144 aa).

This sequence belongs to the asfivirus envelope protein p22 family.

It is found in the virion membrane. It localises to the host cell membrane. The protein is Putative membrane protein 162 of African swine fever virus (isolate Tick/Malawi/Lil 20-1/1983) (ASFV).